We begin with the raw amino-acid sequence, 173 residues long: Mesencephalic astrocyte-derived neurotrophic factor homolog (173 aa).

The signal sequence occupies residues 1 to 22 (MKTWHMVVVIGFLATLAQTSLA). 4 disulfides stabilise this stretch: Cys-28–Cys-114, Cys-31–Cys-103, Cys-61–Cys-72, and Cys-148–Cys-151.

The protein belongs to the ARMET family.

It localises to the secreted. In terms of biological role, required during the maturation of the embryonic nervous system for maintenance of neuronal and cuticular connectivity. Essential for maintenance of dopaminergic neurons and dopamine levels. This is Mesencephalic astrocyte-derived neurotrophic factor homolog from Drosophila simulans (Fruit fly).